Here is a 769-residue protein sequence, read N- to C-terminus: 3-O-beta-D-glucopyranosyl-beta-D-glucuronide phosphorylase (769 aa).

Asp457 acts as the Proton donor in catalysis.

The protein belongs to the glycosyl hydrolase 94 family. Homodimer.

It is found in the cytoplasm. It carries out the reaction 3-O-beta-D-glucosyl-D-glucuronate + phosphate = aldehydo-D-glucuronate + alpha-D-glucose 1-phosphate. The enzyme catalyses a 3-O-beta-D-glucosyl-beta-D-glucuronoside + phosphate = a beta-D-glucuronoside + alpha-D-glucose 1-phosphate. Functionally, glycoside phosphorylase that catalyzes the reversible phosphorolysis of 3-O-beta-D-glucosyl-D-glucuronate into D-glucuronic acid and alpha-D-glucose 1-phosphate. Cannot phosphorolyze cellobionic acid and laminaribiose. In the reverse direction, using alpha-D-glucose 1-phosphate as a donor substrate, the enzyme acts on D-glucuronate and its artificial derivative p-nitrophenyl-beta-D-glucuronide. The apparent catalytic efficiency towards p-nitrophenyl-beta-D-glucuronide is approximately 5-fold higher than that towards D-glucuronic acid. Is probably involved in the metabolism of oligosaccharides containing the 3-O-beta-D-glucopyranosyl-beta-D-glucuronide structure released from bacterial and plant acidic carbohydrates. The protein is 3-O-beta-D-glucopyranosyl-beta-D-glucuronide phosphorylase of Paenibacillus borealis.